The following is a 521-amino-acid chain: Bifunctional purine biosynthesis protein PurH (521 aa).

Positions 1–145 (MIKQALISVS…KNHRDVTVVV (145 aa)) constitute an MGS-like domain.

It belongs to the PurH family.

The enzyme catalyses (6R)-10-formyltetrahydrofolate + 5-amino-1-(5-phospho-beta-D-ribosyl)imidazole-4-carboxamide = 5-formamido-1-(5-phospho-D-ribosyl)imidazole-4-carboxamide + (6S)-5,6,7,8-tetrahydrofolate. It catalyses the reaction IMP + H2O = 5-formamido-1-(5-phospho-D-ribosyl)imidazole-4-carboxamide. It functions in the pathway purine metabolism; IMP biosynthesis via de novo pathway; 5-formamido-1-(5-phospho-D-ribosyl)imidazole-4-carboxamide from 5-amino-1-(5-phospho-D-ribosyl)imidazole-4-carboxamide (10-formyl THF route): step 1/1. The protein operates within purine metabolism; IMP biosynthesis via de novo pathway; IMP from 5-formamido-1-(5-phospho-D-ribosyl)imidazole-4-carboxamide: step 1/1. The protein is Bifunctional purine biosynthesis protein PurH of Burkholderia vietnamiensis (strain G4 / LMG 22486) (Burkholderia cepacia (strain R1808)).